The sequence spans 346 residues: UDP-3-O-acylglucosamine N-acyltransferase (346 aa).

The Proton acceptor role is filled by His253.

Belongs to the transferase hexapeptide repeat family. LpxD subfamily. As to quaternary structure, homotrimer.

It carries out the reaction a UDP-3-O-[(3R)-3-hydroxyacyl]-alpha-D-glucosamine + a (3R)-hydroxyacyl-[ACP] = a UDP-2-N,3-O-bis[(3R)-3-hydroxyacyl]-alpha-D-glucosamine + holo-[ACP] + H(+). It participates in bacterial outer membrane biogenesis; LPS lipid A biosynthesis. Its function is as follows. Catalyzes the N-acylation of UDP-3-O-acylglucosamine using 3-hydroxyacyl-ACP as the acyl donor. Is involved in the biosynthesis of lipid A, a phosphorylated glycolipid that anchors the lipopolysaccharide to the outer membrane of the cell. This chain is UDP-3-O-acylglucosamine N-acyltransferase, found in Rickettsia prowazekii (strain Madrid E).